A 463-amino-acid chain; its full sequence is Probable diacyglycerol O-acyltransferase tgs1 (463 aa).

The active-site Proton acceptor is histidine 137.

Belongs to the long-chain O-acyltransferase family.

It catalyses the reaction an acyl-CoA + a 1,2-diacyl-sn-glycerol = a triacyl-sn-glycerol + CoA. The protein operates within glycerolipid metabolism; triacylglycerol biosynthesis. Its function is as follows. Catalyzes the terminal and only committed step in triacylglycerol synthesis by using diacylglycerol and fatty acyl CoA as substrates. Required for storage lipid synthesis. This chain is Probable diacyglycerol O-acyltransferase tgs1 (tgs1), found in Mycobacterium tuberculosis (strain CDC 1551 / Oshkosh).